A 248-amino-acid chain; its full sequence is Ubiquinone biosynthesis O-methyltransferase (248 aa).

S-adenosyl-L-methionine is bound by residues Arg-40, Gly-71, Asp-92, and Met-135.

It belongs to the methyltransferase superfamily. UbiG/COQ3 family.

The catalysed reaction is a 3-demethylubiquinol + S-adenosyl-L-methionine = a ubiquinol + S-adenosyl-L-homocysteine + H(+). It carries out the reaction a 3-(all-trans-polyprenyl)benzene-1,2-diol + S-adenosyl-L-methionine = a 2-methoxy-6-(all-trans-polyprenyl)phenol + S-adenosyl-L-homocysteine + H(+). It functions in the pathway cofactor biosynthesis; ubiquinone biosynthesis. O-methyltransferase that catalyzes the 2 O-methylation steps in the ubiquinone biosynthetic pathway. The chain is Ubiquinone biosynthesis O-methyltransferase from Roseobacter denitrificans (strain ATCC 33942 / OCh 114) (Erythrobacter sp. (strain OCh 114)).